Consider the following 465-residue polypeptide: Ribulose bisphosphate carboxylase large chain (465 aa).

Lys4 carries the post-translational modification N6,N6,N6-trimethyllysine. Asn113 and Thr163 together coordinate substrate. The active-site Proton acceptor is Lys165. A substrate-binding site is contributed by Lys167. Mg(2+) contacts are provided by Lys191, Asp193, and Glu194. Lys191 carries the N6-carboxylysine modification. The Proton acceptor role is filled by His284. 3 residues coordinate substrate: Arg285, His317, and Ser369.

This sequence belongs to the RuBisCO large chain family. Type I subfamily. Heterohexadecamer of 8 large chains and 8 small chains; disulfide-linked. The disulfide link is formed within the large subunit homodimers. The cofactor is Mg(2+). Post-translationally, the disulfide bond which can form in the large chain dimeric partners within the hexadecamer appears to be associated with oxidative stress and protein turnover.

The protein localises to the plastid. Its subcellular location is the chloroplast. The enzyme catalyses 2 (2R)-3-phosphoglycerate + 2 H(+) = D-ribulose 1,5-bisphosphate + CO2 + H2O. It carries out the reaction D-ribulose 1,5-bisphosphate + O2 = 2-phosphoglycolate + (2R)-3-phosphoglycerate + 2 H(+). In terms of biological role, ruBisCO catalyzes two reactions: the carboxylation of D-ribulose 1,5-bisphosphate, the primary event in carbon dioxide fixation, as well as the oxidative fragmentation of the pentose substrate in the photorespiration process. Both reactions occur simultaneously and in competition at the same active site. This chain is Ribulose bisphosphate carboxylase large chain, found in Bauera rubioides (Dog rose).